The chain runs to 152 residues: Deoxyuridine 5'-triphosphate nucleotidohydrolase (152 aa).

Substrate contacts are provided by residues 71–73 (RSG), N84, 88–90 (LID), and K98.

Belongs to the dUTPase family. Mg(2+) serves as cofactor.

The catalysed reaction is dUTP + H2O = dUMP + diphosphate + H(+). It functions in the pathway pyrimidine metabolism; dUMP biosynthesis; dUMP from dCTP (dUTP route): step 2/2. Functionally, this enzyme is involved in nucleotide metabolism: it produces dUMP, the immediate precursor of thymidine nucleotides and it decreases the intracellular concentration of dUTP so that uracil cannot be incorporated into DNA. This is Deoxyuridine 5'-triphosphate nucleotidohydrolase from Legionella pneumophila (strain Paris).